The sequence spans 189 residues: Peptidyl-tRNA hydrolase (189 aa).

Tyr14 serves as a coordination point for tRNA. His19 serves as the catalytic Proton acceptor. Residues Tyr64, Asn66, and Asn112 each coordinate tRNA.

Belongs to the PTH family. Monomer.

It is found in the cytoplasm. It carries out the reaction an N-acyl-L-alpha-aminoacyl-tRNA + H2O = an N-acyl-L-amino acid + a tRNA + H(+). Its function is as follows. Hydrolyzes ribosome-free peptidyl-tRNAs (with 1 or more amino acids incorporated), which drop off the ribosome during protein synthesis, or as a result of ribosome stalling. Functionally, catalyzes the release of premature peptidyl moieties from peptidyl-tRNA molecules trapped in stalled 50S ribosomal subunits, and thus maintains levels of free tRNAs and 50S ribosomes. This chain is Peptidyl-tRNA hydrolase, found in Clostridium botulinum (strain 657 / Type Ba4).